Consider the following 509-residue polypeptide: Ribonuclease Y (509 aa).

Residues 3–23 (WILYVILPAVCIILGWTIRWL) traverse the membrane as a helical segment. One can recognise a KH domain in the interval 199–284 (TVSTVSLPSD…EIVQKVTREI (86 aa)). Positions 325 to 418 (VLQHSKEVAI…VQIADAISAA (94 aa)) constitute an HD domain.

This sequence belongs to the RNase Y family.

The protein resides in the cell membrane. Functionally, endoribonuclease that initiates mRNA decay. In Treponema denticola (strain ATCC 35405 / DSM 14222 / CIP 103919 / JCM 8153 / KCTC 15104), this protein is Ribonuclease Y.